The primary structure comprises 352 residues: Phosphoribosylformylglycinamidine cyclo-ligase (352 aa).

Belongs to the AIR synthase family.

Its subcellular location is the cytoplasm. It carries out the reaction 2-formamido-N(1)-(5-O-phospho-beta-D-ribosyl)acetamidine + ATP = 5-amino-1-(5-phospho-beta-D-ribosyl)imidazole + ADP + phosphate + H(+). It functions in the pathway purine metabolism; IMP biosynthesis via de novo pathway; 5-amino-1-(5-phospho-D-ribosyl)imidazole from N(2)-formyl-N(1)-(5-phospho-D-ribosyl)glycinamide: step 2/2. This is Phosphoribosylformylglycinamidine cyclo-ligase from Pseudomonas fluorescens (strain Pf0-1).